The primary structure comprises 505 residues: MRWITRPGWPGNLLALAAGASTLLALAPFDIWPLAVLSIAVLYLGLRELSPRQAMWRGWWFGFGLYGAGTWWIYVSMNTYGGASPLLAIVLLLAFFAALAWFFALPTWLWARWLRRNEAPLADALCFAALWLLQEAFRGWFLTGFPWLYAGYSQLDGPLAGLAPLGGVWLISFTLALTAALLCNLHRLRPRPSFLAVASVLLLAPWGLGLALKGHAWTIPAGDPLKVAAIQGNVEQDLKWDPAHIDAQLALYRDLSFSSRPVDLLVWPETAVPVLKDQAQGYIDVMGRFAAERHSALITGVPVREEVHHQRRYYNGITVTGEGDGTYLKQKLVPFGEYVPLQDVLRGAIEFFNLPMSDFARGPEDQPLLQAKGYQIAPYICYEVVYPEFAAGLAARSDLLLTISNDTWFGKSIGPLQHLQMAQMRALEAGRWMIRATNNGVTALIDPFGRITTQIPQFQQAVLYGEVVPMQQLTPYLQWRSWPLAIVCALLLGWALLAGRIAKTV.

Transmembrane regions (helical) follow at residues 23–43 (LLAL…AVLY), 58–78 (GWWF…VSMN), 85–105 (PLLA…FFAL), 125–145 (LCFA…LTGF), 162–182 (LAPL…AALL), and 192–212 (PSFL…GLAL). One can recognise a CN hydrolase domain in the interval 230 to 469 (IQGNVEQDLK…QAVLYGEVVP (240 aa)). The active-site Proton acceptor is Glu-269. The active site involves Lys-329. Cys-381 acts as the Nucleophile in catalysis. A helical membrane pass occupies residues 482 to 502 (WPLAIVCALLLGWALLAGRIA).

It belongs to the CN hydrolase family. Apolipoprotein N-acyltransferase subfamily.

Its subcellular location is the cell inner membrane. The catalysed reaction is N-terminal S-1,2-diacyl-sn-glyceryl-L-cysteinyl-[lipoprotein] + a glycerophospholipid = N-acyl-S-1,2-diacyl-sn-glyceryl-L-cysteinyl-[lipoprotein] + a 2-acyl-sn-glycero-3-phospholipid + H(+). The protein operates within protein modification; lipoprotein biosynthesis (N-acyl transfer). In terms of biological role, catalyzes the phospholipid dependent N-acylation of the N-terminal cysteine of apolipoprotein, the last step in lipoprotein maturation. The sequence is that of Apolipoprotein N-acyltransferase from Pseudomonas putida (strain ATCC 47054 / DSM 6125 / CFBP 8728 / NCIMB 11950 / KT2440).